A 191-amino-acid polypeptide reads, in one-letter code: Stress response regulator protein 1 (191 aa).

Residues 62-181 (SFLLVDDNEI…TNYILQKIEQ (120 aa)) form the Response regulatory domain. At aspartate 114 the chain carries 4-aspartylphosphate.

Functionally, required for stress adaptation, morphogenesis and virulence. In Clavispora lusitaniae (strain ATCC 42720) (Yeast), this protein is Stress response regulator protein 1 (SRR1).